A 646-amino-acid chain; its full sequence is Beta-galactosidase-1-like protein (646 aa).

Residues Met1–Ala23 form the signal peptide. Asn93 carries N-linked (GlcNAc...) asparagine glycosylation. Glu182 serves as the catalytic Proton donor. Asn239 is a glycosylation site (N-linked (GlcNAc...) asparagine). Glu260 (nucleophile) is an active-site residue.

It belongs to the glycosyl hydrolase 35 family.

It localises to the secreted. Its function is as follows. Probable glycosyl hydrolase. The polypeptide is Beta-galactosidase-1-like protein (Glb1l) (Mus musculus (Mouse)).